The primary structure comprises 243 residues: Terpene cyclase atmB (243 aa).

A run of 7 helical transmembrane segments spans residues 19-39 (IADVFVIGMGIGWIINYVGMV), 48-68 (YGMAIMPLCCNIAWEIVYGLI), 78-98 (GVFLSGLTINLGVIYTAIKFG), 112-132 (LPLIFMLGILGFLTGHLALAA), 134-154 (IGPALAYNWGAAFCQLLLSVG), 169-189 (SYTLWLSRFLGSFSVVISAWL), and 205-225 (LILWCLFAWLVVDGSYGVCFY).

It belongs to the paxB family.

It localises to the membrane. Terpene cyclase; part of the ATM2 gene cluster that mediates the biosynthesis of aflatrem, a tremorgenic mycotoxin with acute neurotoxic effects. Synthesis of geranylgeranyl diphosphate (GGPP) by AtmG (a GGPP synthase) precedes condensation of GGPP with indole 3-glycerol phosphate, followed by epoxidation and cyclization by AtmM (a FAD-dependent monooxygenase) and AtmC (a prenyltransferase) to produce paspaline. AtmB is also essential for paspaline production, but its exact role has not been identified yet. AtmP, a cytochrome P450 monooxygenase, subsequently converts paspaline to 13-desoxypaxilline via PC-M6 by removal of the C-30 methyl group and oxidation at C-10. AtmQ, a cytochrome P450 monooxygenase, then catalyzes the oxidation of 13-desoxypaxilline, first at C-7 to produce paspalicine and then at C-13 to form paspalinine. Finally, AtmD prenylates paspalinine to form aflatrem. The sequence is that of Terpene cyclase atmB from Aspergillus flavus.